The chain runs to 549 residues: MNIKNLRRLYNIIHTFLRYGIDEVIPDIPLTRGIRCGRKSLFWVKNQYPNEPFGVRLRLALQELGPVWIKLGQMLSTRRDLFEPELADQLALLQDSVEAFDGKLARRLIEEALGDKLEKWFDDFDETALASASIAQVHIAKFNQNQPLAGKEVVLKVLRPEIERVIKDDLALMYRLASWIPRLNKEGRRLRPVEVVREYEKTLLDELDLRKEMVNAIRLRNNFENSEMLYVPEMYQEFCHKNVIVMERIYGIPVANIDELKANGTDMKLLAERGVQVFFTQVFRDSFFHADMHPGNIFVNPNHPENPQYIGIDCGIVGTLNQNDKRYLAESFVAFFNRDYRRVALMHVESGWTPADTDIDAFEEAFREVCEPIFAKPLSEISFGHVLLNLFTVARKFNMEVQPQLVLLQKTLLYIEGLGRQVYPQLDLWQTAKPFLQDWLNEQVGFKAMWRDLKQRAPQFREHFAEFPEAMFQALQQQKQINFRLNEINQSLKAQRNNTGFSRLMILGIAIAGTFWKFEMLPLWVSVPLLVIEFRILIWCMSFSNNSYS.

A Protein kinase domain is found at 123 to 504; that stretch reads DFDETALASA…QRNNTGFSRL (382 aa). ATP is bound by residues 129–137 and Lys156; that span reads LASASIAQV. Catalysis depends on Asp291, which acts as the Proton acceptor. Residues 505 to 525 traverse the membrane as a helical segment; the sequence is MILGIAIAGTFWKFEMLPLWV.

Belongs to the ABC1 family. UbiB subfamily.

It is found in the cell inner membrane. It participates in cofactor biosynthesis; ubiquinone biosynthesis [regulation]. Its function is as follows. Is probably a protein kinase regulator of UbiI activity which is involved in aerobic coenzyme Q (ubiquinone) biosynthesis. This Glaesserella parasuis serovar 5 (strain SH0165) (Haemophilus parasuis) protein is Probable protein kinase UbiB.